A 330-amino-acid chain; its full sequence is MASCLQASMNSLLPRSSSFSPHPPLSSNSSGRRNLKTFRYAFRAKASAKIPMPPINPKDPFLSTLASIAANSPEKLLNRPVNADVPPYLDIFDSPQLMSSPAQVERSVAYNEHRPRTPPPDLPSMLLDGRIVYIGMPLVPAVTELVVAELMYLQWLDPKEPIYIYINSTGTTRDDGETVGMESEGFAIYDSLMQLKNEVHTVCVGAAIGQACLLLSAGTKGKRFMMPHAKAMIQQPRVPSSGLMPASDVLIRAKEVITNRDILVELLSKHTGNSVETVANVMRRPYYMDAPKAKEFGVIDRILWRGQEKIIADVVPSEEFDKNAGIKSVV.

A chloroplast-targeting transit peptide spans 1–43 (MASCLQASMNSLLPRSSSFSPHPPLSSNSSGRRNLKTFRYAFR). Residues 7–32 (ASMNSLLPRSSSFSPHPPLSSNSSGR) form a disordered region. Low complexity predominate over residues 8 to 30 (SMNSLLPRSSSFSPHPPLSSNSS).

This sequence belongs to the peptidase S14 family. In terms of assembly, component of the chloroplastic Clp protease core complex which consist of at least 16 proteins: CLPP4 (3 copies), CLPP5 (3 copies), CLPR4 (2 copies), ClpP1 (1 copy), CLPP6 (1 copy), CLPR2 (1 copy), CLPT1 (1 copy), CLPT2 (1 copy) and 3 copies of CLPP3 and/or CLPR1 and/or CLPR3. The core complex is organized in two heptameric rings, one containing CLPP3,4,5,6 in a 1:2:3:1 ratio and the other CLPP1 and CLPR1,2,3,4 in a 3:1:1:1:1 ratio.

Its subcellular location is the plastid. The protein resides in the chloroplast. This chain is ATP-dependent Clp protease proteolytic subunit-related protein 3, chloroplastic, found in Arabidopsis thaliana (Mouse-ear cress).